The primary structure comprises 188 residues: Elongation factor P (188 aa).

K34 is modified (N6-(3,6-diaminohexanoyl)-5-hydroxylysine).

The protein belongs to the elongation factor P family. May be beta-lysylated on the epsilon-amino group of Lys-34 by the combined action of EpmA and EpmB, and then hydroxylated on the C5 position of the same residue by EpmC (if this protein is present). Lysylation is critical for the stimulatory effect of EF-P on peptide-bond formation. The lysylation moiety may extend toward the peptidyltransferase center and stabilize the terminal 3-CCA end of the tRNA. Hydroxylation of the C5 position on Lys-34 may allow additional potential stabilizing hydrogen-bond interactions with the P-tRNA.

Its subcellular location is the cytoplasm. Its pathway is protein biosynthesis; polypeptide chain elongation. Involved in peptide bond synthesis. Alleviates ribosome stalling that occurs when 3 or more consecutive Pro residues or the sequence PPG is present in a protein, possibly by augmenting the peptidyl transferase activity of the ribosome. Modification of Lys-34 is required for alleviation. This chain is Elongation factor P, found in Actinobacillus pleuropneumoniae serotype 5b (strain L20).